Here is a 707-residue protein sequence, read N- to C-terminus: ATP-dependent zinc metalloprotease FtsH (707 aa).

The Cytoplasmic portion of the chain corresponds to 1-25 (MSELDNKKDKSKDSNKKPKKPGAFS). A helical membrane pass occupies residues 26–46 (IGNIIIFVIVALLLIWVVFAF). Over 47–128 (LPNNPGTNKS…GTTFTGLELA (82 aa)) the chain is Extracellular. A helical transmembrane segment spans residues 129-149 (TLAIANTSASGIGTLNFSGLV). Residues 150–707 (TPTNQALAIL…IKTDESLDIK (558 aa)) are Cytoplasmic-facing. Position 246-253 (246-253 (GPPGTGKT)) interacts with ATP. Residue histidine 468 coordinates Zn(2+). Residue glutamate 469 is part of the active site. Positions 472 and 546 each coordinate Zn(2+).

The protein in the central section; belongs to the AAA ATPase family. In the C-terminal section; belongs to the peptidase M41 family. Homohexamer. Requires Zn(2+) as cofactor.

It localises to the cell membrane. Functionally, acts as a processive, ATP-dependent zinc metallopeptidase for both cytoplasmic and membrane proteins. Plays a role in the quality control of integral membrane proteins. The sequence is that of ATP-dependent zinc metalloprotease FtsH from Mycoplasma mobile (strain ATCC 43663 / 163K / NCTC 11711) (Mesomycoplasma mobile).